A 247-amino-acid chain; its full sequence is Uridylate kinase (247 aa).

Position 11–14 (11–14 (KASG)) interacts with ATP. The tract at residues 19 to 24 (GKQGFG) is involved in allosteric activation by GTP. Residue glycine 53 coordinates UMP. Residues glycine 54 and arginine 58 each contribute to the ATP site. UMP is bound by residues aspartate 73 and 134 to 141 (TGNPFFTT). ATP-binding residues include threonine 161, glutamine 162, tyrosine 167, and aspartate 170.

The protein belongs to the UMP kinase family. As to quaternary structure, homohexamer.

Its subcellular location is the cytoplasm. It catalyses the reaction UMP + ATP = UDP + ADP. It functions in the pathway pyrimidine metabolism; CTP biosynthesis via de novo pathway; UDP from UMP (UMPK route): step 1/1. Allosterically activated by GTP. Inhibited by UTP. In terms of biological role, catalyzes the reversible phosphorylation of UMP to UDP. In Chelativorans sp. (strain BNC1), this protein is Uridylate kinase.